A 318-amino-acid chain; its full sequence is Ethylene-responsive transcription factor FZP (318 aa).

The span at 1–15 shows a compositional bias: low complexity; sequence MNTRGSGSSSSSSSS. Disordered stretches follow at residues 1-59 and 158-178; these read MNTR…GRFL and SYGH…SGAS. Residues 25-37 are compositionally biased toward pro residues; sequence PPKPASQPSPPSS. A DNA-binding region (AP2/ERF) is located at residues 57-114; sequence RFLGVRRRPWGRYAAEIRDPTTKERHWLGTFDTAQEAALAYDRAALSMKGAQARTNFV. A compositionally biased stretch (basic residues) spans 160-171; that stretch reads GHHHHHHHHHGH.

It belongs to the AP2/ERF transcription factor family. ERF subfamily.

Its subcellular location is the nucleus. Its function is as follows. Required to prevent the formation of axillary meristems within the spikelet meristem and permit the subsequent establishment of floral meristem identity. Mediates the transition from spikelet to floret meristem. Determines the transition from panicle branching to spikelet formation. May specify floral organ identity by regulating the class B genes (Agamous-like genes) MADS6 and MADS17, as well as class E genes MADS1, MADS7 and MADS8 in floral meristem. Possesses transactivation activity. This Oryza sativa subsp. japonica (Rice) protein is Ethylene-responsive transcription factor FZP.